Reading from the N-terminus, the 188-residue chain is Pyridoxal 5'-phosphate synthase subunit PdxT (188 aa).

46–48 lines the L-glutamine pocket; the sequence is GES. The active-site Nucleophile is C78. L-glutamine is bound by residues R105 and 133–134; that span reads IR. Catalysis depends on charge relay system residues H169 and E171.

This sequence belongs to the glutaminase PdxT/SNO family. In the presence of PdxS, forms a dodecamer of heterodimers. Only shows activity in the heterodimer.

The catalysed reaction is aldehydo-D-ribose 5-phosphate + D-glyceraldehyde 3-phosphate + L-glutamine = pyridoxal 5'-phosphate + L-glutamate + phosphate + 3 H2O + H(+). It carries out the reaction L-glutamine + H2O = L-glutamate + NH4(+). The protein operates within cofactor biosynthesis; pyridoxal 5'-phosphate biosynthesis. Catalyzes the hydrolysis of glutamine to glutamate and ammonia as part of the biosynthesis of pyridoxal 5'-phosphate. The resulting ammonia molecule is channeled to the active site of PdxS. This is Pyridoxal 5'-phosphate synthase subunit PdxT from Thermosipho africanus (strain TCF52B).